We begin with the raw amino-acid sequence, 704 residues long: Elongation factor G (704 aa).

The 283-residue stretch at 8–290 folds into the tr-type G domain; that stretch reads EKYRNIGICA…GVVRYLPAPN (283 aa). GTP is bound by residues 17–24, 88–92, and 142–145; these read AHVDAGKT, DTPGH, and NKMD.

It belongs to the TRAFAC class translation factor GTPase superfamily. Classic translation factor GTPase family. EF-G/EF-2 subfamily.

Its subcellular location is the cytoplasm. Functionally, catalyzes the GTP-dependent ribosomal translocation step during translation elongation. During this step, the ribosome changes from the pre-translocational (PRE) to the post-translocational (POST) state as the newly formed A-site-bound peptidyl-tRNA and P-site-bound deacylated tRNA move to the P and E sites, respectively. Catalyzes the coordinated movement of the two tRNA molecules, the mRNA and conformational changes in the ribosome. This Francisella tularensis subsp. mediasiatica (strain FSC147) protein is Elongation factor G.